We begin with the raw amino-acid sequence, 601 residues long: uncharacterized protein (601 aa).

Positions 24–35 are enriched in basic residues; it reads RKSNVVLKKNKG. Disordered regions lie at residues 24–106 and 171–219; these read RKSN…LKLD and YGND…PREE. Over residues 54-81 the composition is skewed to polar residues; it reads SQFSSRDNFRTTQTQASSSSEPSDNTNR. Residues 92–106 are compositionally biased toward basic and acidic residues; the sequence is TPKKEESNAEKLKLD. Residues Ser236 and Ser238 each carry the phosphoserine modification. The disordered stretch occupies residues 260–283; it reads RKRKVLSSSSEDDESSSPEDLLKP.

The protein localises to the nucleus. This is an uncharacterized protein from Schizosaccharomyces pombe (strain 972 / ATCC 24843) (Fission yeast).